The primary structure comprises 138 residues: uncharacterized protein (138 aa).

The next 2 membrane-spanning stretches (helical) occupy residues methionine 1–valine 21 and tyrosine 46–valine 66.

The protein resides in the cell membrane. This is an uncharacterized protein from Methanocaldococcus jannaschii (strain ATCC 43067 / DSM 2661 / JAL-1 / JCM 10045 / NBRC 100440) (Methanococcus jannaschii).